A 1216-amino-acid polypeptide reads, in one-letter code: Regulator of telomere elongation helicase 1 (1216 aa).

The 289-residue stretch at 7–295 (KGVTVDFPFQ…TKVAQQAELH (289 aa)) folds into the Helicase ATP-binding domain. 42-49 (SPTGTGKT) contacts ATP. The [4Fe-4S] cluster site is built by C144, C162, C171, and C206. Residues 150-166 (KKQESNHMQVHLCRRKV) carry the Nuclear localization signal motif. A DEAH box motif is present at residues 249–252 (DEAH). Residues 874–880 (QRGRRRK) carry the Nuclear localization signal motif. 2 disordered regions span residues 978–1018 (GCSS…ATRQ) and 1140–1172 (GPGT…RKTQ). The PIP-box motif lies at 1172-1179 (QSKISSFL).

The protein belongs to the helicase family. RAD3/XPD subfamily. Interacts with TERF1. Interacts (via PIP-box) with PCNA; the interaction is direct and essential for suppressing telomere fragility. Interacts with MMS19; the interaction mediates the association of RTEL1 with the cytosolic iron-sulfur protein assembly (CIA) complex. As to expression, highly expressed in adult testis, liver and ovary.

Its subcellular location is the nucleus. It carries out the reaction ATP + H2O = ADP + phosphate + H(+). Functionally, a probable ATP-dependent DNA helicase implicated in telomere-length regulation, DNA repair and the maintenance of genomic stability. Acts as an anti-recombinase to counteract toxic recombination and limit crossover during meiosis. Regulates meiotic recombination and crossover homeostasis by physically dissociating strand invasion events and thereby promotes noncrossover repair by meiotic synthesis dependent strand annealing (SDSA) as well as disassembly of D loop recombination intermediates. Also disassembles T loops and prevents telomere fragility by counteracting telomeric G4-DNA structures, which together ensure the dynamics and stability of the telomere. This chain is Regulator of telomere elongation helicase 1, found in Bos taurus (Bovine).